The chain runs to 880 residues: DNA gyrase subunit A (880 aa).

The 496-residue stretch at Leu-35–Leu-530 folds into the Topo IIA-type catalytic domain. The active-site O-(5'-phospho-DNA)-tyrosine intermediate is Tyr-123. The short motif at Gln-557 to Gly-563 is the GyrA-box element.

The protein belongs to the type II topoisomerase GyrA/ParC subunit family. Heterotetramer, composed of two GyrA and two GyrB chains. In the heterotetramer, GyrA contains the active site tyrosine that forms a transient covalent intermediate with DNA, while GyrB binds cofactors and catalyzes ATP hydrolysis.

It is found in the cytoplasm. It carries out the reaction ATP-dependent breakage, passage and rejoining of double-stranded DNA.. In terms of biological role, a type II topoisomerase that negatively supercoils closed circular double-stranded (ds) DNA in an ATP-dependent manner to modulate DNA topology and maintain chromosomes in an underwound state. Negative supercoiling favors strand separation, and DNA replication, transcription, recombination and repair, all of which involve strand separation. Also able to catalyze the interconversion of other topological isomers of dsDNA rings, including catenanes and knotted rings. Type II topoisomerases break and join 2 DNA strands simultaneously in an ATP-dependent manner. In Haemophilus influenzae (strain ATCC 51907 / DSM 11121 / KW20 / Rd), this protein is DNA gyrase subunit A.